The sequence spans 959 residues: Protein SEY1 homolog 1 (959 aa).

The Cytoplasmic segment spans residues 1-767; sequence MQESDVFHNQ…ELAAITVHSK (767 aa). A coiled-coil region spans residues 9-86; it reads NQLRVEMLKK…EEEKKEKENY (78 aa). The tract at residues 62-81 is disordered; the sequence is EEKENMKVEEEEIKEEEEKK. Residues 123-340 form the GB1/RHD3-type G domain; that stretch reads GFNYNMLSIL…NQNTYFRPIY (218 aa). 133–140 contributes to the GTP binding site; it reads GPQNSGKS. A helical membrane pass occupies residues 768–788; it reads TPMWLILLIAFLSFDNIVYVF. The Lumenal segment spans residues 789–791; sequence KSP. The chain crosses the membrane as a helical span at residues 792-812; that stretch reads TLLALTLIIIGIIYSLNKIGY. Residues 813 to 959 lie on the Cytoplasmic side of the membrane; it reads AYLIDSVISY…LNKIKEANEF (147 aa). Residues 849-868 are disordered; that stretch reads EAPKRKRPQKKTQDDKPKSS.

This sequence belongs to the TRAFAC class dynamin-like GTPase superfamily. GB1/RHD3 GTPase family. RHD3 subfamily.

It is found in the endoplasmic reticulum membrane. Its function is as follows. Probable GTP-binding protein that may be involved in cell development. This is Protein SEY1 homolog 1 from Entamoeba histolytica (strain ATCC 30459 / HM-1:IMSS / ABRM).